A 491-amino-acid chain; its full sequence is Cysteine--tRNA ligase (491 aa).

A Zn(2+)-binding site is contributed by Cys31. A 'HIGH' region motif is present at residues 33–43; sequence PTVYGDAHLGH. Zn(2+) contacts are provided by Cys226, His251, and Glu255. Residues 283-287 carry the 'KMSKS' region motif; sequence KMGKS. Residue Lys286 participates in ATP binding.

It belongs to the class-I aminoacyl-tRNA synthetase family. Monomer. Requires Zn(2+) as cofactor.

The protein resides in the cytoplasm. It catalyses the reaction tRNA(Cys) + L-cysteine + ATP = L-cysteinyl-tRNA(Cys) + AMP + diphosphate. The polypeptide is Cysteine--tRNA ligase (Bacteroides fragilis (strain ATCC 25285 / DSM 2151 / CCUG 4856 / JCM 11019 / LMG 10263 / NCTC 9343 / Onslow / VPI 2553 / EN-2)).